A 477-amino-acid chain; its full sequence is Glutamate--tRNA ligase (477 aa).

The 'HIGH' region signature appears at 8–18 (PSPTGTLHIGT). The 'KMSKS' region signature appears at 247 to 251 (KLSKR). Lys250 is a binding site for ATP.

The protein belongs to the class-I aminoacyl-tRNA synthetase family. Glutamate--tRNA ligase type 1 subfamily. Monomer.

It is found in the cytoplasm. The catalysed reaction is tRNA(Glu) + L-glutamate + ATP = L-glutamyl-tRNA(Glu) + AMP + diphosphate. Its function is as follows. Catalyzes the attachment of glutamate to tRNA(Glu) in a two-step reaction: glutamate is first activated by ATP to form Glu-AMP and then transferred to the acceptor end of tRNA(Glu). The protein is Glutamate--tRNA ligase of Synechococcus sp. (strain CC9605).